Consider the following 824-residue polypeptide: Type IV secretion system protein PtlC homolog (824 aa).

456-463 is a binding site for ATP; sequence GQSGSGKT.

This sequence belongs to the TrbE/VirB4 family.

The protein localises to the cell membrane. This Bordetella bronchiseptica (strain ATCC BAA-588 / NCTC 13252 / RB50) (Alcaligenes bronchisepticus) protein is Type IV secretion system protein PtlC homolog (ptlC).